The chain runs to 284 residues: MEMO1 family protein MMP1387 (284 aa).

The protein belongs to the MEMO1 family.

This chain is MEMO1 family protein MMP1387, found in Methanococcus maripaludis (strain DSM 14266 / JCM 13030 / NBRC 101832 / S2 / LL).